The following is a 387-amino-acid chain: Cyclin-J-like protein (387 aa).

The Cyclin N-terminal domain occupies 13–142 (DVHCTLREKE…LLEAFSWDLC (130 aa)).

Belongs to the cyclin family. Cyclin J subfamily.

In Mus musculus (Mouse), this protein is Cyclin-J-like protein (Ccnjl).